We begin with the raw amino-acid sequence, 228 residues long: 3-dehydroquinate dehydratase (228 aa).

3-dehydroquinate contacts are provided by residues S26, 51-53 (EIR), and R84. The active-site Proton donor/acceptor is H127. Catalysis depends on K150, which acts as the Schiff-base intermediate with substrate. 3-dehydroquinate contacts are provided by R190, T209, and Q213.

Belongs to the type-I 3-dehydroquinase family. As to quaternary structure, homodimer.

The catalysed reaction is 3-dehydroquinate = 3-dehydroshikimate + H2O. Its pathway is metabolic intermediate biosynthesis; chorismate biosynthesis; chorismate from D-erythrose 4-phosphate and phosphoenolpyruvate: step 3/7. Involved in the third step of the chorismate pathway, which leads to the biosynthesis of aromatic amino acids. Catalyzes the cis-dehydration of 3-dehydroquinate (DHQ) and introduces the first double bond of the aromatic ring to yield 3-dehydroshikimate. This is 3-dehydroquinate dehydratase from Thermoplasma acidophilum (strain ATCC 25905 / DSM 1728 / JCM 9062 / NBRC 15155 / AMRC-C165).